We begin with the raw amino-acid sequence, 140 residues long: Large ribosomal subunit protein uL11 (140 aa).

Belongs to the universal ribosomal protein uL11 family. As to quaternary structure, part of the ribosomal stalk of the 50S ribosomal subunit. Interacts with L10 and the large rRNA to form the base of the stalk. L10 forms an elongated spine to which L12 dimers bind in a sequential fashion forming a multimeric L10(L12)X complex. In terms of processing, one or more lysine residues are methylated.

Functionally, forms part of the ribosomal stalk which helps the ribosome interact with GTP-bound translation factors. The polypeptide is Large ribosomal subunit protein uL11 (Brachyspira hyodysenteriae (strain ATCC 49526 / WA1)).